The sequence spans 340 residues: UPF0324 membrane protein BC_5174 (340 aa).

10 helical membrane-spanning segments follow: residues 13 to 35, 40 to 59, 99 to 118, 128 to 150, 157 to 179, 189 to 211, 218 to 240, 255 to 277, 279 to 301, and 316 to 338; these read FGFS…LAEL, IMGQ…AAIG, VLVI…YGLT, GILT…APQV, TAVG…TLLY, YGVF…APGG, AVIV…GLWF, LPIP…GIIP, VVAG…GLGL, and FVAG…YALG.

It belongs to the UPF0324 family.

The protein localises to the cell membrane. In Bacillus cereus (strain ATCC 14579 / DSM 31 / CCUG 7414 / JCM 2152 / NBRC 15305 / NCIMB 9373 / NCTC 2599 / NRRL B-3711), this protein is UPF0324 membrane protein BC_5174.